We begin with the raw amino-acid sequence, 62 residues long: Photosystem II reaction center protein Z (62 aa).

2 helical membrane-spanning segments follow: residues 8-28 (SVFA…VVLA) and 41-61 (FSGA…NSLI).

It belongs to the PsbZ family. In terms of assembly, PSII is composed of 1 copy each of membrane proteins PsbA, PsbB, PsbC, PsbD, PsbE, PsbF, PsbH, PsbI, PsbJ, PsbK, PsbL, PsbM, PsbT, PsbY, PsbZ, Psb30/Ycf12, at least 3 peripheral proteins of the oxygen-evolving complex and a large number of cofactors. It forms dimeric complexes.

It is found in the plastid. The protein localises to the chloroplast thylakoid membrane. In terms of biological role, may control the interaction of photosystem II (PSII) cores with the light-harvesting antenna, regulates electron flow through the 2 photosystem reaction centers. PSII is a light-driven water plastoquinone oxidoreductase, using light energy to abstract electrons from H(2)O, generating a proton gradient subsequently used for ATP formation. The protein is Photosystem II reaction center protein Z of Psilotum nudum (Whisk fern).